We begin with the raw amino-acid sequence, 53 residues long: Metallothionein (53 aa).

Belongs to the metallothionein superfamily. Type 14 family.

Functionally, this protein complexes cadmium, zinc and copper. The chain is Metallothionein from Synechococcus sp.